The chain runs to 155 residues: Putative methyl-CpG-binding domain protein 12 (155 aa).

Residues 1-53 (MVQCTDCKKWRLIPSMQHYNIIKETQLQTPFVCGTTSGWTPNMSCNVPQDGTT) form a CW-type zinc finger. Residues 3-45 (QCTDCKKWRLIPSMQHYNIIKETQLQTPFVCGTTSGWTPNMSC) carry the MBD-associated domain (MAD) motif. Positions 4, 7, 33, and 45 each coordinate Zn(2+). The region spanning 53–126 (TCDTWPSIPP…SQFSFQIPKP (74 aa)) is the MBD domain. Positions 130 to 155 (NYVKKRTRPVKRRKSSKDNNCEKGKK) are disordered. The segment covering 133–144 (KKRTRPVKRRKS) has biased composition (basic residues). Positions 140–147 (KRRKSSKD) match the Nuclear localization signal motif. The segment covering 145–155 (SKDNNCEKGKK) has biased composition (basic and acidic residues).

The protein localises to the nucleus. In terms of biological role, probable transcriptional regulator. This is Putative methyl-CpG-binding domain protein 12 (MBD12) from Arabidopsis thaliana (Mouse-ear cress).